The sequence spans 188 residues: uncharacterized protein (188 aa).

A disordered region spans residues N57 to R80.

This sequence belongs to the transposase 25 family.

This is an uncharacterized protein from Sinorhizobium fredii (strain NBRC 101917 / NGR234).